A 141-amino-acid polypeptide reads, in one-letter code: Large ribosomal subunit protein uL11 (141 aa).

Belongs to the universal ribosomal protein uL11 family. As to quaternary structure, part of the ribosomal stalk of the 50S ribosomal subunit. Interacts with L10 and the large rRNA to form the base of the stalk. L10 forms an elongated spine to which L12 dimers bind in a sequential fashion forming a multimeric L10(L12)X complex. Post-translationally, one or more lysine residues are methylated.

Its function is as follows. Forms part of the ribosomal stalk which helps the ribosome interact with GTP-bound translation factors. This Clostridium novyi (strain NT) protein is Large ribosomal subunit protein uL11.